The sequence spans 265 residues: Reduced viability upon starvation protein 161 (265 aa).

One can recognise a BAR domain in the interval 15–239; that stretch reads HSVIIKNVDK…LDQQSRDDYA (225 aa). Residues 126 to 193 are a coiled coil; that stretch reads YFKEIEEAIK…NQLKTELPQL (68 aa).

The protein localises to the cytoplasm. It localises to the cytoskeleton. In terms of biological role, component of a cytoskeletal structure that is required for the formation of endocytic vesicles at the plasma membrane level. This Saccharomyces cerevisiae (strain ATCC 204508 / S288c) (Baker's yeast) protein is Reduced viability upon starvation protein 161 (RVS161).